The following is a 179-amino-acid chain: MPRLKDKYQNDVIPAMMEKFGYKNKMQVPKLEKIVINIGLGEALQNPKAVDAAVADLMAITGQRPVLTKAKKSVAGFRVRQGATIGVKVTLRGDRMYEFMDKFVNIVLPRVRDFRGLSPKSFDGRGNYSVGLREQLIFPEIDYDKIDKVRGMEVTFVTTAKTDEEARELLQLMGMPFSR.

The protein belongs to the universal ribosomal protein uL5 family. Part of the 50S ribosomal subunit; part of the 5S rRNA/L5/L18/L25 subcomplex. Contacts the 5S rRNA and the P site tRNA. Forms a bridge to the 30S subunit in the 70S ribosome.

In terms of biological role, this is one of the proteins that bind and probably mediate the attachment of the 5S RNA into the large ribosomal subunit, where it forms part of the central protuberance. In the 70S ribosome it contacts protein S13 of the 30S subunit (bridge B1b), connecting the 2 subunits; this bridge is implicated in subunit movement. Contacts the P site tRNA; the 5S rRNA and some of its associated proteins might help stabilize positioning of ribosome-bound tRNAs. This chain is Large ribosomal subunit protein uL5, found in Carboxydothermus hydrogenoformans (strain ATCC BAA-161 / DSM 6008 / Z-2901).